The following is a 252-amino-acid chain: 3-dehydroquinate dehydratase (252 aa).

3-dehydroquinate is bound by residues Ser-21, 46-48, and Arg-82; that span reads EWR. The active-site Proton donor/acceptor is His-143. The active-site Schiff-base intermediate with substrate is the Lys-170. The 3-dehydroquinate site is built by Arg-213, Ser-232, and Gln-236.

It belongs to the type-I 3-dehydroquinase family. Homodimer.

The catalysed reaction is 3-dehydroquinate = 3-dehydroshikimate + H2O. It participates in metabolic intermediate biosynthesis; chorismate biosynthesis; chorismate from D-erythrose 4-phosphate and phosphoenolpyruvate: step 3/7. In terms of biological role, involved in the third step of the chorismate pathway, which leads to the biosynthesis of aromatic amino acids. Catalyzes the cis-dehydration of 3-dehydroquinate (DHQ) and introduces the first double bond of the aromatic ring to yield 3-dehydroshikimate. This Salmonella paratyphi A (strain ATCC 9150 / SARB42) protein is 3-dehydroquinate dehydratase.